The chain runs to 529 residues: Beta-glucosidase 11 (529 aa).

The first 25 residues, 1–25 (MAVAGAMVMSGALLLLHLLAFTCVA), serve as a signal peptide directing secretion. Residues glutamine 54, histidine 157, and 202–203 (NE) each bind a beta-D-glucoside. Glutamate 203 serves as the catalytic Proton donor. A disulfide bridge links cysteine 222 with cysteine 230. Tyrosine 346 lines the a beta-D-glucoside pocket. Asparagine 361 carries an N-linked (GlcNAc...) asparagine glycan. Residue glutamate 417 coordinates a beta-D-glucoside. Glutamate 417 (nucleophile) is an active-site residue. Asparagine 425 carries N-linked (GlcNAc...) asparagine glycosylation. A beta-D-glucoside is bound by residues tryptophan 466, 473–474 (EW), and phenylalanine 482.

This sequence belongs to the glycosyl hydrolase 1 family.

It carries out the reaction Hydrolysis of terminal, non-reducing beta-D-glucosyl residues with release of beta-D-glucose.. This chain is Beta-glucosidase 11 (BGLU11), found in Oryza sativa subsp. japonica (Rice).